The chain runs to 246 residues: Trypsin-5 (246 aa).

The N-terminal stretch at 1–15 (MNSLLFLALVGAAVA) is a signal peptide. The propeptide at 16–23 (FPVDDDDK) is activation peptide. Residues 24–244 (IVGGYTCREN…YVDWIQDTIA (221 aa)) form the Peptidase S1 domain. Residues cysteine 48 and cysteine 64 are joined by a disulfide bond. Active-site charge relay system residues include histidine 63 and aspartate 107. 3 disulfides stabilise this stretch: cysteine 139/cysteine 206, cysteine 171/cysteine 185, and cysteine 196/cysteine 220. Serine 200 acts as the Charge relay system in catalysis.

The protein belongs to the peptidase S1 family. Post-translationally, proteolytically cleaved and activated by an autocatalytic mechanism. Cleavage by CTRC inhibits autoactivation. As to expression, expressed in the heart, lung, brain, kidney, liver, epididymis, ovary and uterus. Expression in the testis is limited to round and elongating spermatids.

The protein localises to the cytoplasmic vesicle. The protein resides in the secretory vesicle. It is found in the acrosome. It catalyses the reaction Preferential cleavage: Arg-|-Xaa, Lys-|-Xaa.. Its activity is regulated as follows. Activated by autocatalytic cleavage. Cleavage by CTRC inhibits autoactivation. Functionally, serine protease capable of autoactivation. This is Trypsin-5 from Mus musculus (Mouse).